Here is a 290-residue protein sequence, read N- to C-terminus: GTPase Era (290 aa).

An Era-type G domain is found at 2 to 169 (KSGFAAILGR…KNKIYENFSE (168 aa)). Residues 10–17 (GRPSTGKS) are G1. 10-17 (GRPSTGKS) provides a ligand contact to GTP. A G2 region spans residues 36-40 (QTTRN). The tract at residues 57–60 (DTPG) is G3. Residues 57 to 61 (DTPGF) and 119 to 122 (NKVD) each bind GTP. The tract at residues 119 to 122 (NKVD) is G4. A G5 region spans residues 148-150 (ISA). The KH type-2 domain occupies 200–276 (LKEELPYSLY…NLFLQVKLKK (77 aa)).

This sequence belongs to the TRAFAC class TrmE-Era-EngA-EngB-Septin-like GTPase superfamily. Era GTPase family. As to quaternary structure, monomer.

It is found in the cytoplasm. The protein localises to the cell inner membrane. Its function is as follows. An essential GTPase that binds both GDP and GTP, with rapid nucleotide exchange. Plays a role in 16S rRNA processing and 30S ribosomal subunit biogenesis and possibly also in cell cycle regulation and energy metabolism. The polypeptide is GTPase Era (Borrelia garinii subsp. bavariensis (strain ATCC BAA-2496 / DSM 23469 / PBi) (Borreliella bavariensis)).